The chain runs to 211 residues: Probable nicotinate-nucleotide adenylyltransferase (211 aa).

Belongs to the NadD family.

The catalysed reaction is nicotinate beta-D-ribonucleotide + ATP + H(+) = deamido-NAD(+) + diphosphate. It participates in cofactor biosynthesis; NAD(+) biosynthesis; deamido-NAD(+) from nicotinate D-ribonucleotide: step 1/1. Its function is as follows. Catalyzes the reversible adenylation of nicotinate mononucleotide (NaMN) to nicotinic acid adenine dinucleotide (NaAD). The protein is Probable nicotinate-nucleotide adenylyltransferase of Corynebacterium kroppenstedtii (strain DSM 44385 / JCM 11950 / CIP 105744 / CCUG 35717).